The primary structure comprises 324 residues: 33 kDa ribonucleoprotein, chloroplastic (324 aa).

A chloroplast-targeting transit peptide spans 1–71 (MSGCCFSFAA…YRSSIFLSTC (71 aa)). RRM domains follow at residues 114–192 (GRLY…FPEV) and 217–296 (HKLY…AGQK). The segment at 294-324 (GQKAPVSSPPVVETSPENDSDNSELLSSLSS) is disordered. The span at 298–308 (PVSSPPVVETS) shows a compositional bias: low complexity.

Its subcellular location is the plastid. It localises to the chloroplast. In terms of biological role, could be involved in splicing and/or processing of chloroplast RNA's. This is 33 kDa ribonucleoprotein, chloroplastic from Nicotiana sylvestris (Wood tobacco).